Reading from the N-terminus, the 272-residue chain is Dihydropteroate synthase (272 aa).

Residues 1 to 251 enclose the Pterin-binding domain; the sequence is MIKTKIMGIL…GVRVHNVLLN (251 aa). N11 provides a ligand contact to Mg(2+). Residues T51, D89, N108, D172, K208, and 244–246 each bind (7,8-dihydropterin-6-yl)methyl diphosphate; that span reads RVH.

The protein belongs to the DHPS family. In terms of assembly, homodimer. Mg(2+) is required as a cofactor.

It carries out the reaction (7,8-dihydropterin-6-yl)methyl diphosphate + 4-aminobenzoate = 7,8-dihydropteroate + diphosphate. The protein operates within cofactor biosynthesis; tetrahydrofolate biosynthesis; 7,8-dihydrofolate from 2-amino-4-hydroxy-6-hydroxymethyl-7,8-dihydropteridine diphosphate and 4-aminobenzoate: step 1/2. Catalyzes the condensation of para-aminobenzoate (pABA) with 6-hydroxymethyl-7,8-dihydropterin diphosphate (DHPt-PP) to form 7,8-dihydropteroate (H2Pte), the immediate precursor of folate derivatives. In Staphylococcus epidermidis (strain ATCC 35984 / DSM 28319 / BCRC 17069 / CCUG 31568 / BM 3577 / RP62A), this protein is Dihydropteroate synthase (folP).